Here is a 780-residue protein sequence, read N- to C-terminus: Striatin (780 aa).

Residues 53 to 120 (LHFLQHEWAR…QERAKYHKLK (68 aa)) adopt a coiled-coil conformation. The tract at residues 55 to 63 (FLQHEWARF) is caveolin-binding. The tract at residues 124–150 (ELNQGDMKPPSYDSDEGNETEVQPQQN) is disordered. Ser137 bears the Phosphoserine mark. The tract at residues 149-166 (QNSQLMWKQGRQLLRQYL) is calmodulin-binding. Residue Thr225 is modified to Phosphothreonine. Ser227, Ser229, Ser245, and Ser259 each carry phosphoserine. Disordered stretches follow at residues 289 to 310 (DFLVTSEEGDNESRSAGDGTDW) and 365 to 387 (DELPSLQPSVGSPSRPSSSRLPE). Residues 299-310 (NESRSAGDGTDW) are compositionally biased toward basic and acidic residues. WD repeat units lie at residues 461–500 (SHFDGIRALAFHPIEPVLITASEDHTLKMWNLQKTAPAKK), 514–553 (AHKGPVLCVVMSSNGEQCYSGGTDGLIQGWNTTNPNIDPY), 567–606 (GHTDAVWGLAYSAAHQRLLSCSADGTLRLWNTTEVAPALS), 662–701 (NSSCQINRVISHPTLPISITAHEDRHIKFYDNNTGKLIHS), 704–743 (AHLEAVTSLAVDPNGLYLMSGSHDCSIRLWNLESKTCIQE), and 750–780 (KFEESIHDVAFHPSKCYIASAGADALAKVFV).

Belongs to the WD repeat striatin family. As to quaternary structure, part of the core of STRIPAK complexes composed of PP2A catalytic and scaffolding subunits, the striatins (PP2A regulatory subunits), the striatin-associated proteins MOB4, STRIP1 and STRIP2, PDCD10 and members of the STE20 kinases, such as STK24 and STK26. Interacts with CTTNBP2; this interaction may regulate dendritic spine distribution of STRN. Activation of glutamate receptors weakens the interaction with CTTNBP2. Preferentially expressed in brain.

Its subcellular location is the cytoplasm. It localises to the membrane. The protein resides in the cell projection. The protein localises to the dendritic spine. Calmodulin-binding scaffolding protein which is the center of the striatin-interacting phosphatase and kinase (STRIPAK) complexes. STRIPAK complexes have critical roles in protein (de)phosphorylation and are regulators of multiple signaling pathways including Hippo, MAPK, nuclear receptor and cytoskeleton remodeling. Different types of STRIPAK complexes are involved in a variety of biological processes such as cell growth, differentiation, apoptosis, metabolism and immune regulation. This is Striatin (STRN) from Homo sapiens (Human).